Reading from the N-terminus, the 385-residue chain is uncharacterized protein (385 aa).

The next 8 helical transmembrane spans lie at 17–37 (ILII…FIFT), 72–92 (TELM…WFLL), 107–127 (WILK…KCIT), 155–175 (ICLI…FYII), 191–211 (WIQA…LVLL), 295–315 (AFPS…FYFL), 326–346 (ITLL…IVVN), and 354–374 (ITFT…FNSF).

The protein resides in the membrane. This is an uncharacterized protein from Mycoplasma capricolum subsp. capricolum (strain California kid / ATCC 27343 / NCTC 10154).